A 347-amino-acid polypeptide reads, in one-letter code: NADH-ubiquinone oxidoreductase chain 2 (347 aa).

The next 10 helical transmembrane spans lie at 1-21 (MNPLVFTMIMSTVMLGTAIVA), 25-45 (HWLMAWIGFEMNMLAVIPILM), 59-79 (YFLTQATASMLLMLAVTMNLV), 111-131 (FHFWVPEVTQGISLPSGLILL), 149-169 (INLDLLMMLINLSIAIGGWGG), 178-198 (IMAYSSIAHMGWMTAILTYNP), 201-221 (TLLNLMIYILLTTTTFMMFML), 237-257 (MPLLTTAILLTMLSLGGLPPL), 274-294 (NSVIMPTTMAVMALLNLYFYM), and 326-346 (LSPLIILSTLILPLSPMLALL).

This sequence belongs to the complex I subunit 2 family. Core subunit of respiratory chain NADH dehydrogenase (Complex I) which is composed of 45 different subunits. Interacts with TMEM242.

The protein localises to the mitochondrion inner membrane. It carries out the reaction a ubiquinone + NADH + 5 H(+)(in) = a ubiquinol + NAD(+) + 4 H(+)(out). Functionally, core subunit of the mitochondrial membrane respiratory chain NADH dehydrogenase (Complex I) which catalyzes electron transfer from NADH through the respiratory chain, using ubiquinone as an electron acceptor. Essential for the catalytic activity and assembly of complex I. The chain is NADH-ubiquinone oxidoreductase chain 2 from Pteropus rodricensis (Rodriguez flying fox).